The sequence spans 464 residues: Argininosuccinate lyase (464 aa).

It belongs to the lyase 1 family. Argininosuccinate lyase subfamily.

The protein resides in the cytoplasm. It carries out the reaction 2-(N(omega)-L-arginino)succinate = fumarate + L-arginine. It functions in the pathway amino-acid biosynthesis; L-arginine biosynthesis; L-arginine from L-ornithine and carbamoyl phosphate: step 3/3. This Pseudomonas fluorescens (strain ATCC BAA-477 / NRRL B-23932 / Pf-5) protein is Argininosuccinate lyase.